The primary structure comprises 450 residues: 23S rRNA (uracil(1939)-C(5))-methyltransferase RlmD (450 aa).

The TRAM domain occupies 12-70; sequence SKQLSAKLSLSVNQLDHLGAGIAQHQGKVVFIPGALPDETVTVQFTEQKKNYARAKLIK. Positions 83, 89, 92, and 171 each coordinate [4Fe-4S] cluster. 6 residues coordinate S-adenosyl-L-methionine: Q283, F312, N317, E333, D360, and D380. C406 (nucleophile) is an active-site residue.

It belongs to the class I-like SAM-binding methyltransferase superfamily. RNA M5U methyltransferase family. RlmD subfamily.

The catalysed reaction is uridine(1939) in 23S rRNA + S-adenosyl-L-methionine = 5-methyluridine(1939) in 23S rRNA + S-adenosyl-L-homocysteine + H(+). In terms of biological role, catalyzes the formation of 5-methyl-uridine at position 1939 (m5U1939) in 23S rRNA. This chain is 23S rRNA (uracil(1939)-C(5))-methyltransferase RlmD, found in Shewanella baltica (strain OS155 / ATCC BAA-1091).